A 268-amino-acid polypeptide reads, in one-letter code: Phosphatidylglycerol--prolipoprotein diacylglyceryl transferase (268 aa).

The next 7 membrane-spanning stretches (helical) occupy residues 14–34, 60–80, 95–115, 124–144, 176–196, 203–223, and 238–258; these read IIFS…LIGF, LLFN…VLFY, VWEG…AMLV, FWVV…MGRI, SQLY…NWFI, GSVA…VEFF, and ISMG…FIVL. Arg143 provides a ligand contact to a 1,2-diacyl-sn-glycero-3-phospho-(1'-sn-glycerol).

The protein belongs to the Lgt family.

The protein resides in the cell inner membrane. It catalyses the reaction L-cysteinyl-[prolipoprotein] + a 1,2-diacyl-sn-glycero-3-phospho-(1'-sn-glycerol) = an S-1,2-diacyl-sn-glyceryl-L-cysteinyl-[prolipoprotein] + sn-glycerol 1-phosphate + H(+). It functions in the pathway protein modification; lipoprotein biosynthesis (diacylglyceryl transfer). Catalyzes the transfer of the diacylglyceryl group from phosphatidylglycerol to the sulfhydryl group of the N-terminal cysteine of a prolipoprotein, the first step in the formation of mature lipoproteins. In Mannheimia succiniciproducens (strain KCTC 0769BP / MBEL55E), this protein is Phosphatidylglycerol--prolipoprotein diacylglyceryl transferase.